The following is a 321-amino-acid chain: Ribose-phosphate pyrophosphokinase (321 aa).

ATP is bound by residues 39–41 (DGE) and 98–99 (RQ). Positions 132 and 170 each coordinate Mg(2+). Residue lysine 195 is part of the active site. Residues arginine 197, aspartate 221, and 225–229 (DTGGT) contribute to the D-ribose 5-phosphate site.

This sequence belongs to the ribose-phosphate pyrophosphokinase family. Class I subfamily. Homohexamer. It depends on Mg(2+) as a cofactor.

The protein resides in the cytoplasm. It carries out the reaction D-ribose 5-phosphate + ATP = 5-phospho-alpha-D-ribose 1-diphosphate + AMP + H(+). It functions in the pathway metabolic intermediate biosynthesis; 5-phospho-alpha-D-ribose 1-diphosphate biosynthesis; 5-phospho-alpha-D-ribose 1-diphosphate from D-ribose 5-phosphate (route I): step 1/1. Involved in the biosynthesis of the central metabolite phospho-alpha-D-ribosyl-1-pyrophosphate (PRPP) via the transfer of pyrophosphoryl group from ATP to 1-hydroxyl of ribose-5-phosphate (Rib-5-P). In Mycoplasmopsis pulmonis (strain UAB CTIP) (Mycoplasma pulmonis), this protein is Ribose-phosphate pyrophosphokinase.